The following is a 299-amino-acid chain: Oxygen-dependent coproporphyrinogen-III oxidase (299 aa).

Serine 92 serves as a coordination point for substrate. A divalent metal cation-binding residues include histidine 96 and histidine 106. Residue histidine 106 is the Proton donor of the active site. 108–110 (NVR) is a binding site for substrate. The a divalent metal cation site is built by histidine 145 and histidine 175. An important for dimerization region spans residues 240-275 (YVEFNLVWDRGTLFGLQTGGRTESILMSMPPLVRWE). 258–260 (GGR) lines the substrate pocket.

Belongs to the aerobic coproporphyrinogen-III oxidase family. Homodimer. It depends on a divalent metal cation as a cofactor.

The protein localises to the cytoplasm. The enzyme catalyses coproporphyrinogen III + O2 + 2 H(+) = protoporphyrinogen IX + 2 CO2 + 2 H2O. It participates in porphyrin-containing compound metabolism; protoporphyrin-IX biosynthesis; protoporphyrinogen-IX from coproporphyrinogen-III (O2 route): step 1/1. Involved in the heme biosynthesis. Catalyzes the aerobic oxidative decarboxylation of propionate groups of rings A and B of coproporphyrinogen-III to yield the vinyl groups in protoporphyrinogen-IX. This chain is Oxygen-dependent coproporphyrinogen-III oxidase, found in Salmonella heidelberg (strain SL476).